The following is a 99-amino-acid chain: uncharacterized protein (99 aa).

This is an uncharacterized protein from Escherichia coli O157:H7.